We begin with the raw amino-acid sequence, 426 residues long: Serine--tRNA ligase (426 aa).

An L-serine-binding site is contributed by 233–235 (TSE). 264-266 (RSE) serves as a coordination point for ATP. Glu287 is an L-serine binding site. Residue 351 to 354 (EISS) participates in ATP binding. L-serine is bound at residue Ser387.

Belongs to the class-II aminoacyl-tRNA synthetase family. Type-1 seryl-tRNA synthetase subfamily. As to quaternary structure, homodimer. The tRNA molecule binds across the dimer.

It is found in the cytoplasm. The catalysed reaction is tRNA(Ser) + L-serine + ATP = L-seryl-tRNA(Ser) + AMP + diphosphate + H(+). The enzyme catalyses tRNA(Sec) + L-serine + ATP = L-seryl-tRNA(Sec) + AMP + diphosphate + H(+). Its pathway is aminoacyl-tRNA biosynthesis; selenocysteinyl-tRNA(Sec) biosynthesis; L-seryl-tRNA(Sec) from L-serine and tRNA(Sec): step 1/1. Functionally, catalyzes the attachment of serine to tRNA(Ser). Is also able to aminoacylate tRNA(Sec) with serine, to form the misacylated tRNA L-seryl-tRNA(Sec), which will be further converted into selenocysteinyl-tRNA(Sec). The chain is Serine--tRNA ligase from Xylella fastidiosa (strain 9a5c).